The chain runs to 1259 residues: Translocation and assembly module subunit TamB (1259 aa).

Residue M1 is modified to N-formylmethionine. Residues 1 to 6 lie on the Cytoplasmic side of the membrane; the sequence is MSLWKK. A helical; Signal-anchor for type II membrane protein transmembrane segment spans residues 7–27; it reads ISLGVVIVILLLLGSVAFLVG. Residues 28-1259 are Periplasmic-facing; that stretch reads TTSGLHLVFK…ALDLLYQFEF (1232 aa).

It belongs to the TamB family. As to quaternary structure, interacts with TamA to form the translocation and assembly module (TAM).

Its subcellular location is the cell inner membrane. Its function is as follows. Component of the translocation and assembly module (TAM), which facilitates the insertion and assembly of specific beta-barrel proteins into the outer membrane. Promotes the assembly and secretion across the outer membrane of a subset of autotransporters, such as Ag43. Involved in the assembly of the outer membrane usher protein FimD. In vitro, when TAM is reconstituted into preformed liposomes, it can promote the assembly of several outer membrane proteins, including OmpA, EspP, Ag43 and FadL. TamA is sufficient to catalyze a low level of outer membrane protein (OMP) assembly, but both TamA and TamB are required for efficient OMP assembly. TamB may regulate TamA activity. It could regulate conformational changes in TamA to drive its function in OMP assembly. It could also act as a chaperone that facilitate the transport of nascent membrane proteins across the periplasm to TamA in the outer membrane. Functionally, in addition, is involved in outer membrane lipid homeostasis. Likely transports phospholipids between the inner membrane and the outer membrane. It would provide a bridge-like structure that protects phospholipids as they travel across the periplasm. One possible explanation for the apparent dual function of TAM is that TamB is a somewhat generic transporter of hydrophobic molecules. TamB, YdbH and YhdP are redundant, but not equivalent, in performing an essential function for growth and maintaining lipid homeostasis in the outer membrane. The transport functions of TamB and YhdP could be differentiated according to the fatty acid saturation state of the phospholipids, with TamB transporting more unsaturated phospholipids and YhdP more saturated phospholipids. Any of these three proteins is sufficient for growth. This Escherichia coli (strain K12) protein is Translocation and assembly module subunit TamB.